The primary structure comprises 646 residues: Threonine--tRNA ligase (646 aa).

Residues 1-61 (MIKITFPDGS…NEDANFVLYK (61 aa)) enclose the TGS domain. The segment at 242 to 541 (DHRKIGKEMD…LIEHTAGKFP (300 aa)) is catalytic. Zn(2+) is bound by residues cysteine 337, histidine 388, and histidine 518.

The protein belongs to the class-II aminoacyl-tRNA synthetase family. Homodimer. Zn(2+) serves as cofactor.

It localises to the cytoplasm. The enzyme catalyses tRNA(Thr) + L-threonine + ATP = L-threonyl-tRNA(Thr) + AMP + diphosphate + H(+). Catalyzes the attachment of threonine to tRNA(Thr) in a two-step reaction: L-threonine is first activated by ATP to form Thr-AMP and then transferred to the acceptor end of tRNA(Thr). Also edits incorrectly charged L-seryl-tRNA(Thr). The protein is Threonine--tRNA ligase of Phocaeicola vulgatus (strain ATCC 8482 / DSM 1447 / JCM 5826 / CCUG 4940 / NBRC 14291 / NCTC 11154) (Bacteroides vulgatus).